A 117-amino-acid chain; its full sequence is Ribosome-binding factor A (117 aa).

The protein belongs to the RbfA family. As to quaternary structure, monomer. Binds 30S ribosomal subunits, but not 50S ribosomal subunits or 70S ribosomes.

Its subcellular location is the cytoplasm. In terms of biological role, one of several proteins that assist in the late maturation steps of the functional core of the 30S ribosomal subunit. Associates with free 30S ribosomal subunits (but not with 30S subunits that are part of 70S ribosomes or polysomes). Required for efficient processing of 16S rRNA. May interact with the 5'-terminal helix region of 16S rRNA. In Lacticaseibacillus casei (strain BL23) (Lactobacillus casei), this protein is Ribosome-binding factor A.